The primary structure comprises 272 residues: Sugar-phosphatase AraL (272 aa).

This sequence belongs to the HAD-like hydrolase superfamily. Requires Mg(2+) as cofactor.

The catalysed reaction is sugar phosphate + H2O = sugar + phosphate.. The enzyme catalyses O-phospho-L-serine + H2O = L-serine + phosphate. It catalyses the reaction O-phospho-D-serine + H2O = D-serine + phosphate. Functionally, catalyzes the dephosphorylation of C5 and C6 carbon sugars in vitro. Catalyzes the dephosphorylation of 3'-AMP and phosphoserine in vitro. The sequence is that of Sugar-phosphatase AraL (araL) from Bacillus subtilis (strain 168).